The primary structure comprises 1163 residues: Putative beta-glucuronidase (1163 aa).

The first 20 residues, 1 to 20 (MPRFLKYILGLFLISISAFG), serve as a signal peptide directing secretion.

It belongs to the glycosyl hydrolase 2 family.

Its subcellular location is the periplasm. The catalysed reaction is a beta-D-glucuronoside + H2O = D-glucuronate + an alcohol. In terms of biological role, glycoside hydrolase involved in ulvan degradation. Ulvan is the main polysaccharide component of the Ulvales (green seaweed) cell wall. It is composed of disaccharide building blocks comprising 3-sulfated rhamnose (Rha3S) linked to D-glucuronic acid (GlcA), L-iduronic acid (IduA), or D-xylose (Xyl). The chain is Putative beta-glucuronidase from Formosa agariphila (strain DSM 15362 / KCTC 12365 / LMG 23005 / KMM 3901 / M-2Alg 35-1).